We begin with the raw amino-acid sequence, 398 residues long: Acetate kinase (398 aa).

A Mg(2+)-binding site is contributed by asparagine 10. Lysine 17 is a binding site for ATP. Arginine 89 is a substrate binding site. Catalysis depends on aspartate 148, which acts as the Proton donor/acceptor. ATP contacts are provided by residues histidine 208–glycine 212, aspartate 283–arginine 285, and glycine 331–asparagine 335. Glutamate 385 lines the Mg(2+) pocket.

Belongs to the acetokinase family. Homodimer. Requires Mg(2+) as cofactor. Mn(2+) serves as cofactor.

The protein resides in the cytoplasm. The catalysed reaction is acetate + ATP = acetyl phosphate + ADP. The protein operates within metabolic intermediate biosynthesis; acetyl-CoA biosynthesis; acetyl-CoA from acetate: step 1/2. In terms of biological role, catalyzes the formation of acetyl phosphate from acetate and ATP. Can also catalyze the reverse reaction. In Histophilus somni (strain 2336) (Haemophilus somnus), this protein is Acetate kinase.